The chain runs to 154 residues: Large ribosomal subunit protein uL13 (154 aa).

The segment at 129 to 154 is disordered; it reads SQHPHEAQQPEALDVGTLNRKNKRIA.

It belongs to the universal ribosomal protein uL13 family. In terms of assembly, part of the 50S ribosomal subunit.

In terms of biological role, this protein is one of the early assembly proteins of the 50S ribosomal subunit, although it is not seen to bind rRNA by itself. It is important during the early stages of 50S assembly. This is Large ribosomal subunit protein uL13 from Bartonella bacilliformis (strain ATCC 35685 / KC583 / Herrer 020/F12,63).